Consider the following 335-residue polypeptide: F420-dependent glucose-6-phosphate dehydrogenase (335 aa).

Position 40 (D40) interacts with coenzyme F420-(gamma-Glu)n. Residue H41 is the Proton donor of the active site. Coenzyme F420-(gamma-Glu)n-binding positions include T77 and 108 to 109 (TG). E110 functions as the Proton acceptor in the catalytic mechanism. Coenzyme F420-(gamma-Glu)n contacts are provided by residues N113, 177 to 178 (GG), and 180 to 181 (VV). Residues T195, K198, K259, and R283 each coordinate substrate.

It belongs to the F420-dependent glucose-6-phosphate dehydrogenase family. In terms of assembly, homodimer.

The enzyme catalyses oxidized coenzyme F420-(gamma-L-Glu)(n) + D-glucose 6-phosphate + H(+) = 6-phospho-D-glucono-1,5-lactone + reduced coenzyme F420-(gamma-L-Glu)(n). Catalyzes the coenzyme F420-dependent oxidation of glucose 6-phosphate (G6P) to 6-phosphogluconolactone. This Segniliparus rotundus (strain ATCC BAA-972 / CDC 1076 / CIP 108378 / DSM 44985 / JCM 13578) protein is F420-dependent glucose-6-phosphate dehydrogenase.